Here is an 858-residue protein sequence, read N- to C-terminus: Bifunctional uridylyltransferase/uridylyl-removing enzyme (858 aa).

The tract at residues 1 to 324 (MSASVAEPPP…PATSGVTRVL (324 aa)) is uridylyltransferase. The segment at 325–681 (SPGRFVEKQG…ARPSPVGDAL (357 aa)) is uridylyl-removing. The 123-residue stretch at 443 to 565 (VDQHILMVLR…VGSERRLTAL (123 aa)) folds into the HD domain. ACT domains are found at residues 682 to 761 (QVLV…PEPS) and 790 to 858 (ILSV…AIAV).

Belongs to the GlnD family. Mg(2+) serves as cofactor.

It carries out the reaction [protein-PII]-L-tyrosine + UTP = [protein-PII]-uridylyl-L-tyrosine + diphosphate. The catalysed reaction is [protein-PII]-uridylyl-L-tyrosine + H2O = [protein-PII]-L-tyrosine + UMP + H(+). With respect to regulation, uridylyltransferase (UTase) activity is inhibited by glutamine, while glutamine activates uridylyl-removing (UR) activity. Modifies, by uridylylation and deuridylylation, the PII regulatory proteins (GlnB and homologs), in response to the nitrogen status of the cell that GlnD senses through the glutamine level. Under low glutamine levels, catalyzes the conversion of the PII proteins and UTP to PII-UMP and PPi, while under higher glutamine levels, GlnD hydrolyzes PII-UMP to PII and UMP (deuridylylation). Thus, controls uridylylation state and activity of the PII proteins, and plays an important role in the regulation of nitrogen assimilation and metabolism. This is Bifunctional uridylyltransferase/uridylyl-removing enzyme from Burkholderia mallei (strain ATCC 23344).